Here is a 237-residue protein sequence, read N- to C-terminus: Ribonuclease PH (237 aa).

Residues Arg-86 and 124–126 (GTR) each bind phosphate.

Belongs to the RNase PH family. As to quaternary structure, homohexameric ring arranged as a trimer of dimers.

The enzyme catalyses tRNA(n+1) + phosphate = tRNA(n) + a ribonucleoside 5'-diphosphate. In terms of biological role, phosphorolytic 3'-5' exoribonuclease that plays an important role in tRNA 3'-end maturation. Removes nucleotide residues following the 3'-CCA terminus of tRNAs; can also add nucleotides to the ends of RNA molecules by using nucleoside diphosphates as substrates, but this may not be physiologically important. Probably plays a role in initiation of 16S rRNA degradation (leading to ribosome degradation) during starvation. The protein is Ribonuclease PH of Shewanella piezotolerans (strain WP3 / JCM 13877).